The sequence spans 300 residues: MNTLVLKIDAILSKHLKKQLAPYTINSQNTYVAFAAKKNGVTVLLYKSGKLVLQGNGANALAQELNLPVAKTVFEASNNSQDIPIIGSDEVGNGSYFGGIAVVASFVDPKDHSFLKKLGVDDSKKLSDKTIQQIAPLLEKQIPHQSLLLSPKKYNELVGKSKPYNAISIKVALHNQAIFLLLQKGIQPKQIVIDAFTSQSNYEKHLKKEKSHFPNPLTFQEKAESHYLAVAVSSIIARNLFLDNLDQLGQDLGYQLPSGAGSASDKVASQLLAAYGMSSLEYSAKLHFANTHKAQALLTK.

Positions isoleucine 83 to lysine 300 constitute an RNase H type-2 domain. A divalent metal cation is bound by residues aspartate 89, glutamate 90, and aspartate 194.

Belongs to the RNase HII family. RnhC subfamily. The cofactor is Mn(2+). Mg(2+) is required as a cofactor.

The protein localises to the cytoplasm. The enzyme catalyses Endonucleolytic cleavage to 5'-phosphomonoester.. In terms of biological role, endonuclease that specifically degrades the RNA of RNA-DNA hybrids. This chain is Ribonuclease HIII, found in Streptococcus pyogenes serotype M4 (strain MGAS10750).